Reading from the N-terminus, the 608-residue chain is Elongation factor 4 (608 aa).

The tr-type G domain occupies 11–193 (DHIRNFSIVA…AIVNRLPPPK (183 aa)). GTP-binding positions include 23-28 (DHGKST) and 140-143 (NKID).

The protein belongs to the TRAFAC class translation factor GTPase superfamily. Classic translation factor GTPase family. LepA subfamily.

The protein localises to the cell inner membrane. It carries out the reaction GTP + H2O = GDP + phosphate + H(+). Required for accurate and efficient protein synthesis under certain stress conditions. May act as a fidelity factor of the translation reaction, by catalyzing a one-codon backward translocation of tRNAs on improperly translocated ribosomes. Back-translocation proceeds from a post-translocation (POST) complex to a pre-translocation (PRE) complex, thus giving elongation factor G a second chance to translocate the tRNAs correctly. Binds to ribosomes in a GTP-dependent manner. This Agrobacterium fabrum (strain C58 / ATCC 33970) (Agrobacterium tumefaciens (strain C58)) protein is Elongation factor 4.